Here is a 202-residue protein sequence, read N- to C-terminus: Interleukin-17D (202 aa).

A signal peptide spans 1–15 (MLVAGFLLALPPSWA). Positions 65 to 85 (QARNASCPAGGRPADRRFRPP) are disordered. N-linked (GlcNAc...) asparagine glycans are attached at residues Asn68 and Asn181.

This sequence belongs to the IL-17 family. In terms of tissue distribution, expressed preferentially in adipose, skeletal muscle and CNS.

The protein resides in the secreted. Functionally, induces expression of IL6, CXCL8/IL8, and CSF2/GM-CSF from endothelial cells. The chain is Interleukin-17D (IL17D) from Homo sapiens (Human).